We begin with the raw amino-acid sequence, 338 residues long: Nicotinate-nucleotide--dimethylbenzimidazole phosphoribosyltransferase (338 aa).

E305 (proton acceptor) is an active-site residue.

The protein belongs to the CobT family.

The catalysed reaction is 5,6-dimethylbenzimidazole + nicotinate beta-D-ribonucleotide = alpha-ribazole 5'-phosphate + nicotinate + H(+). The protein operates within nucleoside biosynthesis; alpha-ribazole biosynthesis; alpha-ribazole from 5,6-dimethylbenzimidazole: step 1/2. In terms of biological role, catalyzes the synthesis of alpha-ribazole-5'-phosphate from nicotinate mononucleotide (NAMN) and 5,6-dimethylbenzimidazole (DMB). The chain is Nicotinate-nucleotide--dimethylbenzimidazole phosphoribosyltransferase from Rhizobium etli (strain CIAT 652).